Here is a 775-residue protein sequence, read N- to C-terminus: Tumor necrosis factor alpha-induced protein 3 (775 aa).

Ala2 is modified (N-acetylalanine). Positions 58–300 (PQFREIIHKA…LTDPENEMKE (243 aa)) are TRAF-binding. Residues 92–263 (LVALKTNGDG…SQHFVPLVTL (172 aa)) form the OTU domain. The active site involves Asp100. Cys103 acts as the Nucleophile in catalysis. Interaction with ubiquitin regions lie at residues 157–159 (LCY), 190–192 (SLE), and 224–227 (FAPL). The active-site Proton acceptor is His256. Residues 369-775 (AQNPLEPSTP…ECYQFKQMYG (407 aa)) form an interaction with TNIP1 region. Residues 381-416 (SLMDIKCETPNCPFFMSVNTQPLCHECSERRQKNQS) form an A20-type 1 zinc finger. Residues 386-445 (KCETPNCPFFMSVNTQPLCHECSERRQKNQSKLPKLNSKLGPEGLPGVGLGSSNWSPEET) are interaction with RIPK1. Zn(2+) contacts are provided by Cys387, Cys392, Cys404, and Cys407. A disordered region spans residues 415–455 (QSKLPKLNSKLGPEGLPGVGLGSSNWSPEETAGGPHSAPPT). A Phosphoserine modification is found at Ser451. A20-type zinc fingers lie at residues 464–499 (ETTAMKCRSPGCPFTLNVQHNGFCERCHARQINASH) and 500–533 (TADPGKCQACLQDVTRTFNGICSTCFKRTTAEPS). Zn(2+) contacts are provided by Cys470, Cys475, Cys487, Cys490, Cys506, Cys509, Cys521, and Cys524. A compositionally biased stretch (polar residues) spans 567–580 (TGNVSPSGCLSQAA). The interval 567–590 (TGNVSPSGCLSQAARTPGDRAGTS) is disordered. 4 consecutive A20-type zinc fingers follow at residues 586–621 (RAGTSKCRKAGCMYFGTPENKGFCTLCFIEYRENKQ), 636–671 (FQNNVPCLGRECGTLGSTMFEGYCQKCFIEAQNQRF), 695–730 (VASRLKCARASCKNILACRSEELCMECQHLSQRVGS), and 741–775 (EPPKQRCRAPACDHFGNAKCNGYCNECYQFKQMYG). Residues 590 to 640 (SKCRKAGCMYFGTPENKGFCTLCFIEYRENKQSVTASEKAGSPAPRFQNNV) are required for proteasomal degradation of UBE2N and UBE2D3, TRAF6 deubiquitination, and TAX1BP1 interaction with UBE2N. Positions 591 to 775 (KCRKAGCMYF…ECYQFKQMYG (185 aa)) are sufficient for inhibitory activity of TNF-induced NF-kappa-B activity. 16 residues coordinate Zn(2+): Cys592, Cys597, Cys609, Cys612, Cys642, Cys647, Cys659, Cys662, Cys701, Cys706, Cys718, Cys721, Cys747, Cys752, Cys764, and Cys767. The tract at residues 682 to 775 (RSSQHRDMPR…ECYQFKQMYG (94 aa)) is required for lysosomal localization and for TRAF2 lysosomal degradation.

Belongs to the peptidase C64 family. As to quaternary structure, homodimer. Interacts with TNIP1, TAX1BP1 and TRAF2. Interacts with RNF11, ITCH and TAX1BP1 only after TNF stimulation; these interaction are transient and they are lost after 1 hour of stimulation with TNF. Interacts with YWHAZ and YWHAH. Interacts with IKBKG; the interaction is induced by TNF stimulation and by polyubiquitin. Interacts with RIPK1. Interacts with UBE2N; the interaction requires TAX1BP1. Interacts with TRAF6. In terms of tissue distribution, found in most tissues during development. Strikingly high levels are found in lymphoid organs, including the thymus, spleen, and gut-associated lymphoid tissue. Constitutively expressed in immature and mature thymocyte subpopulations as well as in resting peripheral T-cells; activation of these leads to down-regulation.

It is found in the cytoplasm. The protein resides in the nucleus. Its subcellular location is the lysosome. The enzyme catalyses Thiol-dependent hydrolysis of ester, thioester, amide, peptide and isopeptide bonds formed by the C-terminal Gly of ubiquitin (a 76-residue protein attached to proteins as an intracellular targeting signal).. Functionally, ubiquitin-editing enzyme that contains both ubiquitin ligase and deubiquitinase activities. Involved in immune and inflammatory responses signaled by cytokines, such as TNF-alpha and IL-1 beta, or pathogens via Toll-like receptors (TLRs) through terminating NF-kappa-B activity. Essential component of a ubiquitin-editing protein complex, comprising also RNF11, ITCH and TAX1BP1, that ensures the transient nature of inflammatory signaling pathways. In cooperation with TAX1BP1 promotes disassembly of E2-E3 ubiquitin protein ligase complexes in IL-1R and TNFR-1 pathways; affected are at least E3 ligases TRAF6, TRAF2 and BIRC2, and E2 ubiquitin-conjugating enzymes UBE2N and UBE2D3. In cooperation with TAX1BP1 promotes ubiquitination of UBE2N and proteasomal degradation of UBE2N and UBE2D3. Upon TNF stimulation, deubiquitinates 'Lys-63'-polyubiquitin chains on RIPK1 and catalyzes the formation of 'Lys-48'-polyubiquitin chains. This leads to RIPK1 proteasomal degradation and consequently termination of the TNF- or LPS-mediated activation of NF-kappa-B. Deubiquitinates TRAF6 probably acting on 'Lys-63'-linked polyubiquitin. Upon T-cell receptor (TCR)-mediated T-cell activation, deubiquitinates 'Lys-63'-polyubiquitin chains on MALT1 thereby mediating disassociation of the CBM (CARD11:BCL10:MALT1) and IKK complexes and preventing sustained IKK activation. Deubiquitinates NEMO/IKBKG; the function is facilitated by TNIP1 and leads to inhibition of NF-kappa-B activation. Upon stimulation by bacterial peptidoglycans, probably deubiquitinates RIPK2. Can also inhibit I-kappa-B-kinase (IKK) through a non-catalytic mechanism which involves polyubiquitin; polyubiquitin promotes association with IKBKG and prevents IKK MAP3K7-mediated phosphorylation. Targets TRAF2 for lysosomal degradation. In vitro able to deubiquitinate 'Lys-11'-, 'Lys-48'- and 'Lys-63' polyubiquitin chains. Inhibitor of programmed cell death. Has a role in the function of the lymphoid system. Required for LPS-induced production of pro-inflammatory cytokines and IFN beta in LPS-tolerized macrophages. This Mus musculus (Mouse) protein is Tumor necrosis factor alpha-induced protein 3 (Tnfaip3).